A 283-amino-acid polypeptide reads, in one-letter code: NAD kinase (283 aa).

Asp66 acts as the Proton acceptor in catalysis. Residues 66-67 (DG), 134-135 (ND), Arg145, Arg163, Asp165, and 176-181 (TAYSMS) each bind NAD(+).

This sequence belongs to the NAD kinase family. Requires a divalent metal cation as cofactor.

The protein resides in the cytoplasm. It carries out the reaction NAD(+) + ATP = ADP + NADP(+) + H(+). Functionally, involved in the regulation of the intracellular balance of NAD and NADP, and is a key enzyme in the biosynthesis of NADP. Catalyzes specifically the phosphorylation on 2'-hydroxyl of the adenosine moiety of NAD to yield NADP. In Chlorobaculum tepidum (strain ATCC 49652 / DSM 12025 / NBRC 103806 / TLS) (Chlorobium tepidum), this protein is NAD kinase.